The chain runs to 148 residues: NADPH-dependent 7-cyano-7-deazaguanine reductase (148 aa).

The active-site Thioimide intermediate is Cys-50. The active-site Proton donor is the Asp-57. Substrate-binding positions include 72–74 (VES) and 91–92 (HE).

Belongs to the GTP cyclohydrolase I family. QueF type 1 subfamily.

It localises to the cytoplasm. The catalysed reaction is 7-aminomethyl-7-carbaguanine + 2 NADP(+) = 7-cyano-7-deazaguanine + 2 NADPH + 3 H(+). The protein operates within tRNA modification; tRNA-queuosine biosynthesis. Its function is as follows. Catalyzes the NADPH-dependent reduction of 7-cyano-7-deazaguanine (preQ0) to 7-aminomethyl-7-deazaguanine (preQ1). The polypeptide is NADPH-dependent 7-cyano-7-deazaguanine reductase (Helicobacter acinonychis (strain Sheeba)).